Here is a 106-residue protein sequence, read N- to C-terminus: Iron-sulfur cluster assembly protein CyaY (106 aa).

The protein belongs to the frataxin family.

In terms of biological role, involved in iron-sulfur (Fe-S) cluster assembly. May act as a regulator of Fe-S biogenesis. The protein is Iron-sulfur cluster assembly protein CyaY of Colwellia psychrerythraea (strain 34H / ATCC BAA-681) (Vibrio psychroerythus).